The sequence spans 443 residues: MSHSAEPLPMTARRSGPLTGEAQVPGDKSISHRALILGALSVGETHITGLLEGQDVLDTAAAMRAFGAQVERLGEGEWRVNGVGVGGFAEPEGVIDCGNSGTGVRLIMGAMATTPITATFTGDASLSRRPMGRVTDPLELFGCEVTAREGKRLPLTIKGASEPVPVRYKTPVASAQIKSAVLLAGLNAPGETVVIEAEPTRDHTERMLAGFGAAITTETTAEGHVIILKGRPELKPQPVAVPRDPSSAAFPVAAALIVPGSEIRVPGVSRNPTRDGLYVTLLEMGADIRFENQREEGGEPVADLVVRHGPLKGVTVPAERAASMIDEFPILSVIACFAEGTTVMQGVHELRVKESDRIDAMAVGLRANGAEVVDTQDTMTVHGKGGLDGGATCATHLDHRIAMSFLVAGLASHQPISVDDGGPIATSFPDFLPLMRGLGAQID.

The segment at 1–25 is disordered; the sequence is MSHSAEPLPMTARRSGPLTGEAQVP. Residues K28, S29, and R33 each coordinate 3-phosphoshikimate. A phosphoenolpyruvate-binding site is contributed by K28. The phosphoenolpyruvate site is built by G101 and R129. Residues S174, Q176, D326, and K353 each coordinate 3-phosphoshikimate. Q176 serves as a coordination point for phosphoenolpyruvate. Catalysis depends on D326, which acts as the Proton acceptor. Positions 357 and 400 each coordinate phosphoenolpyruvate.

It belongs to the EPSP synthase family. In terms of assembly, monomer.

It is found in the cytoplasm. It carries out the reaction 3-phosphoshikimate + phosphoenolpyruvate = 5-O-(1-carboxyvinyl)-3-phosphoshikimate + phosphate. Its pathway is metabolic intermediate biosynthesis; chorismate biosynthesis; chorismate from D-erythrose 4-phosphate and phosphoenolpyruvate: step 6/7. In terms of biological role, catalyzes the transfer of the enolpyruvyl moiety of phosphoenolpyruvate (PEP) to the 5-hydroxyl of shikimate-3-phosphate (S3P) to produce enolpyruvyl shikimate-3-phosphate and inorganic phosphate. The sequence is that of 3-phosphoshikimate 1-carboxyvinyltransferase from Paracoccus denitrificans (strain Pd 1222).